A 270-amino-acid chain; its full sequence is Putative phosphoenolpyruvate synthase regulatory protein (270 aa).

Glycine 151–threonine 158 lines the ADP pocket.

This sequence belongs to the pyruvate, phosphate/water dikinase regulatory protein family. PSRP subfamily.

It carries out the reaction [pyruvate, water dikinase] + ADP = [pyruvate, water dikinase]-phosphate + AMP + H(+). The catalysed reaction is [pyruvate, water dikinase]-phosphate + phosphate + H(+) = [pyruvate, water dikinase] + diphosphate. Its function is as follows. Bifunctional serine/threonine kinase and phosphorylase involved in the regulation of the phosphoenolpyruvate synthase (PEPS) by catalyzing its phosphorylation/dephosphorylation. The protein is Putative phosphoenolpyruvate synthase regulatory protein of Methylobacillus flagellatus (strain ATCC 51484 / DSM 6875 / VKM B-1610 / KT).